We begin with the raw amino-acid sequence, 279 residues long: Large ribosomal subunit protein uL2 (279 aa).

2 disordered regions span residues 29–49 (PVKQ…NGRV) and 202–279 (NASI…KKKG). Low complexity predominate over residues 36 to 49 (GKSSSGGRNNNGRV). The segment covering 209–220 (GRSRWLGRRPHN) has biased composition (basic residues).

Belongs to the universal ribosomal protein uL2 family. As to quaternary structure, part of the 50S ribosomal subunit. Forms a bridge to the 30S subunit in the 70S ribosome.

In terms of biological role, one of the primary rRNA binding proteins. Required for association of the 30S and 50S subunits to form the 70S ribosome, for tRNA binding and peptide bond formation. It has been suggested to have peptidyltransferase activity; this is somewhat controversial. Makes several contacts with the 16S rRNA in the 70S ribosome. The protein is Large ribosomal subunit protein uL2 of Beijerinckia indica subsp. indica (strain ATCC 9039 / DSM 1715 / NCIMB 8712).